Here is a 275-residue protein sequence, read N- to C-terminus: Voltage-dependent calcium channel gamma-5 subunit (275 aa).

The next 4 membrane-spanning stretches (helical) occupy residues 8–28 (ALTL…GIAV), 103–123 (FPLV…IGHI), 129–149 (ILAF…VVGL), and 176–196 (GWSF…GVMS).

It belongs to the PMP-22/EMP/MP20 family. CACNG subfamily. The L-type calcium channel is composed of five subunits: alpha-1, alpha-2/delta, beta and gamma. Acts as an auxiliary subunit for AMPA-selective glutamate receptors (AMPARs). Found in a complex with GRIA1, GRIA2, GRIA3, GRIA4, CNIH2, CNIH3, CACNG2, CACNG3, CACNG4, CACNG7 and CACNG8. Interacts with GRIA1, GRIA2, GRIA3 and GRIA4.

Its subcellular location is the membrane. It is found in the postsynaptic density membrane. In terms of biological role, regulates the gating properties of AMPA-selective glutamate receptors (AMPARs). Modulates their gating properties by accelerating their rates of activation, deactivation and desensitization. Displays subunit-specific AMPA receptor regulation. Shows specificity for GRIA1, GRIA4 and the long isoform of GRIA2. Thought to stabilize the calcium channel in an inactivated (closed) state. This Homo sapiens (Human) protein is Voltage-dependent calcium channel gamma-5 subunit (CACNG5).